The following is a 379-amino-acid chain: Putative cysteine desulfurase IscS 1 (379 aa).

Pyridoxal 5'-phosphate is bound by residues 71-72 (GT), Asn-151, Gln-179, and 199-201 (SGH). Lys-202 carries the N6-(pyridoxal phosphate)lysine modification. Position 237 (Thr-237) interacts with pyridoxal 5'-phosphate. Residue Cys-325 is the Cysteine persulfide intermediate of the active site. Cys-325 contacts [2Fe-2S] cluster.

The protein belongs to the class-V pyridoxal-phosphate-dependent aminotransferase family. NifS/IscS subfamily. It depends on pyridoxal 5'-phosphate as a cofactor.

The enzyme catalyses (sulfur carrier)-H + L-cysteine = (sulfur carrier)-SH + L-alanine. Its function is as follows. Catalyzes the removal of elemental sulfur from cysteine to produce alanine. This is Putative cysteine desulfurase IscS 1 (iscS1) from Bacillus subtilis (strain 168).